The chain runs to 168 residues: Putative adenylate kinase (168 aa).

ATP-binding residues include Gly-10, Gly-12, Lys-13, Thr-14, and Thr-15. Positions 28 to 51 (HLNERIREEGLDAGRDEERDSLVA) are NMP. Residues 97 to 107 (DRGEPAAKAAE) form an LID region. Arg-98 lines the ATP pocket.

The protein belongs to the adenylate kinase family. AK6 subfamily. Interacts with uS11. Not a structural component of 40S pre-ribosomes, but transiently interacts with them by binding to uS11.

It catalyses the reaction AMP + ATP = 2 ADP. The catalysed reaction is ATP + H2O = ADP + phosphate + H(+). Broad-specificity nucleoside monophosphate (NMP) kinase that catalyzes the reversible transfer of the terminal phosphate group between nucleoside triphosphates and monophosphates. Also has ATPase activity. Involved in the late maturation steps of the 30S ribosomal particles, specifically 16S rRNA maturation. While NMP activity is not required for ribosome maturation, ATPase activity is. Associates transiently with small ribosomal subunit protein uS11. ATP hydrolysis breaks the interaction with uS11. May temporarily remove uS11 from the ribosome to enable a conformational change of the ribosomal RNA that is needed for the final maturation step of the small ribosomal subunit. In Natronomonas pharaonis (strain ATCC 35678 / DSM 2160 / CIP 103997 / JCM 8858 / NBRC 14720 / NCIMB 2260 / Gabara) (Halobacterium pharaonis), this protein is Putative adenylate kinase.